A 180-amino-acid chain; its full sequence is Calcium-binding protein E (180 aa).

EF-hand domains are found at residues 3–38 (KVEAQIEKIFTSFDKDGDGNLSWDEVFSRMSSNSNI), 40–76 (DPLAATKSMFDHYNRDADTENLSIQEIREVLMSKKIK), 85–120 (ALRSKVKDFRKKYDTDNDGVVTFDEMYQLYLKDPDF), and 139–174 (RAKSSCRYFFSAVDKDKNDKLSYLEIHEYLKKHPEF). Positions 16, 18, 20, 22, and 27 each coordinate Ca(2+). Positions 98, 100, 102, 109, 152, 154, 156, 158, and 163 each coordinate Ca(2+).

This chain is Calcium-binding protein E (cbpE), found in Dictyostelium discoideum (Social amoeba).